The sequence spans 221 residues: Protein GrpE 1 (221 aa).

Disordered regions lie at residues 1–44 and 192–221; these read MTEE…AAAQ and VAEP…PEEG. Low complexity predominate over residues 26–44; it reads KAAPSEGAAPAGDAAAAAQ. The span at 203-221 shows a compositional bias: basic and acidic residues; the sequence is KADEAEAADDKESGGPEEG.

Belongs to the GrpE family. In terms of assembly, homodimer.

The protein resides in the cytoplasm. Functionally, participates actively in the response to hyperosmotic and heat shock by preventing the aggregation of stress-denatured proteins, in association with DnaK and GrpE. It is the nucleotide exchange factor for DnaK and may function as a thermosensor. Unfolded proteins bind initially to DnaJ; upon interaction with the DnaJ-bound protein, DnaK hydrolyzes its bound ATP, resulting in the formation of a stable complex. GrpE releases ADP from DnaK; ATP binding to DnaK triggers the release of the substrate protein, thus completing the reaction cycle. Several rounds of ATP-dependent interactions between DnaJ, DnaK and GrpE are required for fully efficient folding. The sequence is that of Protein GrpE 1 from Streptomyces avermitilis (strain ATCC 31267 / DSM 46492 / JCM 5070 / NBRC 14893 / NCIMB 12804 / NRRL 8165 / MA-4680).